The sequence spans 435 residues: Adenylosuccinate synthetase (435 aa).

GTP is bound by residues 11–17 (GDEGKGK) and 39–41 (GHT). The active-site Proton acceptor is the Asp12. Residues Asp12 and Gly39 each contribute to the Mg(2+) site. IMP is bound by residues 12-15 (DEGK), 37-40 (NAGH), Thr128, Arg142, Gln223, Thr238, and Arg302. His40 (proton donor) is an active-site residue. Position 298–304 (298–304 (SVTGRPR)) interacts with substrate. GTP contacts are provided by residues Arg304, 330 to 332 (KLD), and 412 to 414 (STG).

The protein belongs to the adenylosuccinate synthetase family. As to quaternary structure, homodimer. Requires Mg(2+) as cofactor.

It is found in the cytoplasm. The catalysed reaction is IMP + L-aspartate + GTP = N(6)-(1,2-dicarboxyethyl)-AMP + GDP + phosphate + 2 H(+). The protein operates within purine metabolism; AMP biosynthesis via de novo pathway; AMP from IMP: step 1/2. Plays an important role in the de novo pathway of purine nucleotide biosynthesis. Catalyzes the first committed step in the biosynthesis of AMP from IMP. This is Adenylosuccinate synthetase from Coxiella burnetii (strain RSA 493 / Nine Mile phase I).